Consider the following 248-residue polypeptide: MAGHSKWANIKHRKERQDAKKGKIFTKLIRELTVAARQGGGVPADNPRLRLAVDKALTANMTRDTIDRAIARGVGSNDADNMVELSYEGYAPSGVAIIVEAMTDNRNRTAAEVRHAFSKCGGNLGTDGSVAYMFERKGQISFAPGVDEEALMDAALEAGADDVVVNDDGSIDVFTTFADFISVNEALAAAGFKGDEAEVTMIPSTTATLDLETAQKVLKLIDMLEDLDDVQNVYSNADIPDDVMAQLG.

This sequence belongs to the TACO1 family.

It is found in the cytoplasm. This chain is Probable transcriptional regulatory protein PLES_43501, found in Pseudomonas aeruginosa (strain LESB58).